The primary structure comprises 135 residues: Calcium-binding protein KIC (135 aa).

The EF-hand domain maps to 74-109; it reads MSKEDAQGMVREGDLDGDGALNQTEFCVLMVRLSPE. Ca(2+) is bound by residues D87, D89, D91, and E98.

In terms of assembly, interacts with KCBP (via C-terminus). KIC and calmodulin show competitive binding to KCBP. Interacts with CML42. Binds to ABCG36. In terms of tissue distribution, expressed in stems, leaves and flowers.

Its function is as follows. Calcium-binding regulatory protein that interacts with kinesin motor protein KCBP in a calcium-dependent manner. Inhibits KCBP microtubule binding activity and microtubule-stimulated ATPase activity. Involved in the regulation of trichome branching through its interaction with KCBP. This is Calcium-binding protein KIC from Arabidopsis thaliana (Mouse-ear cress).